The following is a 174-amino-acid chain: Large ribosomal subunit protein uL10 (174 aa).

The protein belongs to the universal ribosomal protein uL10 family. As to quaternary structure, part of the ribosomal stalk of the 50S ribosomal subunit. The N-terminus interacts with L11 and the large rRNA to form the base of the stalk. The C-terminus forms an elongated spine to which L12 dimers bind in a sequential fashion forming a multimeric L10(L12)X complex.

Forms part of the ribosomal stalk, playing a central role in the interaction of the ribosome with GTP-bound translation factors. The polypeptide is Large ribosomal subunit protein uL10 (Methylobacillus flagellatus (strain ATCC 51484 / DSM 6875 / VKM B-1610 / KT)).